The chain runs to 148 residues: MKLDLKILDARMRDYMPAYATTGSAGLDLRACLDAPVTLQPGETTLVPTGLAIHLADPGYAALILPRSGLGHKHGIVLGNLVGLIDSDYQGQLMVSTWNRGQTEFVLNPFERLAQLVIVPVVQAQFNIVDDFAQSDRGEGGFGSTGRH.

Substrate contacts are provided by residues 67 to 69 (RSG), N80, 84 to 86 (LID), and M94.

It belongs to the dUTPase family. The cofactor is Mg(2+).

The enzyme catalyses dUTP + H2O = dUMP + diphosphate + H(+). Its pathway is pyrimidine metabolism; dUMP biosynthesis; dUMP from dCTP (dUTP route): step 2/2. This enzyme is involved in nucleotide metabolism: it produces dUMP, the immediate precursor of thymidine nucleotides and it decreases the intracellular concentration of dUTP so that uracil cannot be incorporated into DNA. The sequence is that of Deoxyuridine 5'-triphosphate nucleotidohydrolase from Burkholderia ambifaria (strain ATCC BAA-244 / DSM 16087 / CCUG 44356 / LMG 19182 / AMMD) (Burkholderia cepacia (strain AMMD)).